We begin with the raw amino-acid sequence, 457 residues long: Argininosuccinate lyase (457 aa).

It belongs to the lyase 1 family. Argininosuccinate lyase subfamily.

Its subcellular location is the cytoplasm. The enzyme catalyses 2-(N(omega)-L-arginino)succinate = fumarate + L-arginine. It functions in the pathway amino-acid biosynthesis; L-arginine biosynthesis; L-arginine from L-ornithine and carbamoyl phosphate: step 3/3. This chain is Argininosuccinate lyase, found in Cronobacter sakazakii (strain ATCC BAA-894) (Enterobacter sakazakii).